Reading from the N-terminus, the 428-residue chain is Glutamate-1-semialdehyde 2,1-aminomutase (428 aa).

Position 267 is an N6-(pyridoxal phosphate)lysine (Lys-267).

The protein belongs to the class-III pyridoxal-phosphate-dependent aminotransferase family. HemL subfamily. As to quaternary structure, homodimer. The cofactor is pyridoxal 5'-phosphate.

It is found in the cytoplasm. The enzyme catalyses (S)-4-amino-5-oxopentanoate = 5-aminolevulinate. It participates in porphyrin-containing compound metabolism; protoporphyrin-IX biosynthesis; 5-aminolevulinate from L-glutamyl-tRNA(Glu): step 2/2. This Trichlorobacter lovleyi (strain ATCC BAA-1151 / DSM 17278 / SZ) (Geobacter lovleyi) protein is Glutamate-1-semialdehyde 2,1-aminomutase.